The following is a 100-amino-acid chain: MIREERLLKVLKAPHISEKSTMVAEKQNTIVFKIAVDATKAEVKAAVAKLFEVEVETVRTLNMKGKTKRSGARVGRRSDWKKAYVTLKAGQDIDFMGAAE.

This sequence belongs to the universal ribosomal protein uL23 family. In terms of assembly, part of the 50S ribosomal subunit. Contacts protein L29, and trigger factor when it is bound to the ribosome.

Its function is as follows. One of the early assembly proteins it binds 23S rRNA. One of the proteins that surrounds the polypeptide exit tunnel on the outside of the ribosome. Forms the main docking site for trigger factor binding to the ribosome. This chain is Large ribosomal subunit protein uL23, found in Aeromonas salmonicida (strain A449).